A 163-amino-acid chain; its full sequence is ATP synthase subunit delta, chloroplastic (163 aa).

It belongs to the ATPase delta chain family. F-type ATPases have 2 components, F(1) - the catalytic core - and F(0) - the membrane proton channel. F(1) has five subunits: alpha(3), beta(3), gamma(1), delta(1), epsilon(1). CF(0) has four main subunits: a(1), b(1), b'(1) and c(10-14). The alpha and beta chains form an alternating ring which encloses part of the gamma chain. F(1) is attached to F(0) by a central stalk formed by the gamma and epsilon chains, while a peripheral stalk is formed by the delta, b and b' chains.

The protein resides in the plastid. Its subcellular location is the chloroplast thylakoid membrane. Functionally, f(1)F(0) ATP synthase produces ATP from ADP in the presence of a proton or sodium gradient. F-type ATPases consist of two structural domains, F(1) containing the extramembraneous catalytic core and F(0) containing the membrane proton channel, linked together by a central stalk and a peripheral stalk. During catalysis, ATP synthesis in the catalytic domain of F(1) is coupled via a rotary mechanism of the central stalk subunits to proton translocation. Its function is as follows. This protein is part of the stalk that links CF(0) to CF(1). It either transmits conformational changes from CF(0) to CF(1) or is implicated in proton conduction. This chain is ATP synthase subunit delta, chloroplastic, found in Cyanidioschyzon merolae (strain NIES-3377 / 10D) (Unicellular red alga).